The sequence spans 178 residues: Large ribosomal subunit protein uL6 (178 aa).

Belongs to the universal ribosomal protein uL6 family. As to quaternary structure, part of the 50S ribosomal subunit.

Its function is as follows. This protein binds to the 23S rRNA, and is important in its secondary structure. It is located near the subunit interface in the base of the L7/L12 stalk, and near the tRNA binding site of the peptidyltransferase center. The sequence is that of Large ribosomal subunit protein uL6 from Campylobacter jejuni subsp. jejuni serotype O:2 (strain ATCC 700819 / NCTC 11168).